The chain runs to 462 residues: Cysteine--tRNA ligase (462 aa).

Zn(2+) is bound at residue cysteine 28. The 'HIGH' region signature appears at 30–40 (MTVYDYCHIGH). Zn(2+)-binding residues include cysteine 209, histidine 234, and glutamate 238. The short motif at 266 to 270 (KMSKS) is the 'KMSKS' region element. Lysine 269 contacts ATP.

It belongs to the class-I aminoacyl-tRNA synthetase family. As to quaternary structure, monomer. Zn(2+) serves as cofactor.

The protein resides in the cytoplasm. The catalysed reaction is tRNA(Cys) + L-cysteine + ATP = L-cysteinyl-tRNA(Cys) + AMP + diphosphate. The polypeptide is Cysteine--tRNA ligase (Pseudomonas fluorescens (strain SBW25)).